The chain runs to 563 residues: Light-independent protochlorophyllide reductase subunit B (563 aa).

Asp-36 contributes to the [4Fe-4S] cluster binding site. Catalysis depends on Asp-349, which acts as the Proton donor. A substrate-binding site is contributed by Gly-484–Met-485.

Belongs to the ChlB/BchB/BchZ family. Protochlorophyllide reductase is composed of three subunits; ChlL, ChlN and ChlB. Forms a heterotetramer of two ChlB and two ChlN subunits. [4Fe-4S] cluster serves as cofactor.

It is found in the plastid. The protein resides in the chloroplast. The enzyme catalyses chlorophyllide a + oxidized 2[4Fe-4S]-[ferredoxin] + 2 ADP + 2 phosphate = protochlorophyllide a + reduced 2[4Fe-4S]-[ferredoxin] + 2 ATP + 2 H2O. The protein operates within porphyrin-containing compound metabolism; chlorophyll biosynthesis (light-independent). In terms of biological role, component of the dark-operative protochlorophyllide reductase (DPOR) that uses Mg-ATP and reduced ferredoxin to reduce ring D of protochlorophyllide (Pchlide) to form chlorophyllide a (Chlide). This reaction is light-independent. The NB-protein (ChlN-ChlB) is the catalytic component of the complex. The polypeptide is Light-independent protochlorophyllide reductase subunit B (Chlamydomonas moewusii (Chlamydomonas eugametos)).